Reading from the N-terminus, the 481-residue chain is Proline--tRNA ligase (481 aa).

The protein belongs to the class-II aminoacyl-tRNA synthetase family. ProS type 3 subfamily. Homodimer.

Its subcellular location is the cytoplasm. It carries out the reaction tRNA(Pro) + L-proline + ATP = L-prolyl-tRNA(Pro) + AMP + diphosphate. Its function is as follows. Catalyzes the attachment of proline to tRNA(Pro) in a two-step reaction: proline is first activated by ATP to form Pro-AMP and then transferred to the acceptor end of tRNA(Pro). This chain is Proline--tRNA ligase, found in Chlorobium limicola (strain DSM 245 / NBRC 103803 / 6330).